A 270-amino-acid chain; its full sequence is Formamidopyrimidine-DNA glycosylase (270 aa).

Proline 2 (schiff-base intermediate with DNA) is an active-site residue. Glutamate 3 (proton donor) is an active-site residue. Lysine 58 (proton donor; for beta-elimination activity) is an active-site residue. 3 residues coordinate DNA: histidine 91, arginine 109, and arginine 151. Residues 236-270 (LVYGRGGEACKTCQKPLKEIRMNDRTTVYCVTCQQ) form an FPG-type zinc finger. The Proton donor; for delta-elimination activity role is filled by arginine 260.

The protein belongs to the FPG family. In terms of assembly, monomer. Requires Zn(2+) as cofactor.

It carries out the reaction Hydrolysis of DNA containing ring-opened 7-methylguanine residues, releasing 2,6-diamino-4-hydroxy-5-(N-methyl)formamidopyrimidine.. The enzyme catalyses 2'-deoxyribonucleotide-(2'-deoxyribose 5'-phosphate)-2'-deoxyribonucleotide-DNA = a 3'-end 2'-deoxyribonucleotide-(2,3-dehydro-2,3-deoxyribose 5'-phosphate)-DNA + a 5'-end 5'-phospho-2'-deoxyribonucleoside-DNA + H(+). In terms of biological role, involved in base excision repair of DNA damaged by oxidation or by mutagenic agents. Acts as a DNA glycosylase that recognizes and removes damaged bases. Has a preference for oxidized purines, such as 7,8-dihydro-8-oxoguanine (8-oxoG). Has AP (apurinic/apyrimidinic) lyase activity and introduces nicks in the DNA strand. Cleaves the DNA backbone by beta-delta elimination to generate a single-strand break at the site of the removed base with both 3'- and 5'-phosphates. This is Formamidopyrimidine-DNA glycosylase from Cellvibrio japonicus (strain Ueda107) (Pseudomonas fluorescens subsp. cellulosa).